Here is a 445-residue protein sequence, read N- to C-terminus: MNMMAKFQMSRIDLRNRVLSAAQLRSALPRGGVDVDAVVPKVRPIVDAVAQRGAQAALEYGESFDGIRPETVRVPRELLSQALENLDADVRAALQVSIDRARAVHADQRRTDTTTTLAPGATVTERWVPVERVGLYVPGGNAVYPSSVVMNVVPAQTAGVDSMVIASPPQGQFGGRPHPTILAAAALLGVDEVWAVGGAQAVALLAYGGTDTDGAELAPVDMITGPGNIYVTAAKRICRSQVGIDAEAGPTEIAILADHTADPVHVAADLISQAEHDEMAASVLVTDSETLAEATDRELANQLATTKHVERVTAALSGKQSAIVLVDDIDAGVRTVNAYAAEHLEIQTVDAPGVAGRIRSAGAIFVGAWSPVSLGDYCAGSNHVLPTAGCARHSSGLSVQTFLRGIHVVEYDEAALKDVSGHVITLSKAEDLPAHGEAVRRRFER.

NAD(+) contacts are provided by Tyr136, Gln200, and Asn228. Thr251, Gln273, and His276 together coordinate substrate. 2 residues coordinate Zn(2+): Gln273 and His276. Catalysis depends on proton acceptor residues Glu342 and His343. Positions 343, 376, 430, and 435 each coordinate substrate. Asp376 contacts Zn(2+). Residue His435 coordinates Zn(2+).

It belongs to the histidinol dehydrogenase family. Requires Zn(2+) as cofactor.

It catalyses the reaction L-histidinol + 2 NAD(+) + H2O = L-histidine + 2 NADH + 3 H(+). Its pathway is amino-acid biosynthesis; L-histidine biosynthesis; L-histidine from 5-phospho-alpha-D-ribose 1-diphosphate: step 9/9. Functionally, catalyzes the sequential NAD-dependent oxidations of L-histidinol to L-histidinaldehyde and then to L-histidine. The sequence is that of Histidinol dehydrogenase (hisD) from Mycolicibacterium smegmatis (Mycobacterium smegmatis).